We begin with the raw amino-acid sequence, 456 residues long: MGQTLFDKVWNRHVLYGKLGEPQLLYIDLHLIHEVTSPQAFEGLRLQNRKLRRPDLTFATLDHNVPTIDIFNIKDEIANKQITTLQKNAIDFGVHIFDMGSDEQGIVHMVGPETGLTQPGKTIVCGDSHTATHGAFGAIAFGIGTSEVEHVFATQTLWQTKPKNLKIDINGTLPTGVYAKDIILHLIKTYGVDFGTGYALEFTGETIKNLSMDGRMTICNMAIEGGAKYGIIQPDDITFEYVKGRPFADNFVKSVDKWRELYSDDDAIFDRVIELDVSTLEPQVTWGTNPEMGVNFSEPFPEISDINDQRAYDYMGLEPGQKAEDIDLGYVFLGSCTNARLSDLIEASHIVKGNKVHPNITAIVVPGSRTVKKEAEKLGLDTIFKNAGFEWREPGCSMCLGMNPDQVPEGVHCASTSNRNFEGRQGKGARTHLVSPAMAAAAAIHGKFVDVRKVVV.

The [4Fe-4S] cluster site is built by Cys336, Cys396, and Cys399.

Belongs to the aconitase/IPM isomerase family. LeuC type 1 subfamily. In terms of assembly, heterodimer of LeuC and LeuD. Requires [4Fe-4S] cluster as cofactor.

It carries out the reaction (2R,3S)-3-isopropylmalate = (2S)-2-isopropylmalate. It participates in amino-acid biosynthesis; L-leucine biosynthesis; L-leucine from 3-methyl-2-oxobutanoate: step 2/4. Functionally, catalyzes the isomerization between 2-isopropylmalate and 3-isopropylmalate, via the formation of 2-isopropylmaleate. The sequence is that of 3-isopropylmalate dehydratase large subunit from Staphylococcus aureus (strain MW2).